The chain runs to 123 residues: Large ribosomal subunit protein bL12 (123 aa).

K84 carries the N6-methyllysine modification. Residues 94-123 (PATLKEGMSKEDGDEAKTKLEEAGASVELK) are disordered. The segment covering 100-115 (GMSKEDGDEAKTKLEE) has biased composition (basic and acidic residues).

Belongs to the bacterial ribosomal protein bL12 family. Homodimer. Part of the ribosomal stalk of the 50S ribosomal subunit. Forms a multimeric L10(L12)X complex, where L10 forms an elongated spine to which 2 to 4 L12 dimers bind in a sequential fashion. Binds GTP-bound translation factors.

Seems to be the binding site for several of the factors involved in protein synthesis and appears to be essential for accurate translation. Functionally, forms part of the ribosomal stalk which helps the ribosome interact with GTP-bound translation factors. Is thus essential for accurate translation. The protein is Large ribosomal subunit protein bL12 of Halophilic eubacterium NRCC 41227.